The chain runs to 193 residues: dCTP deaminase (193 aa).

Residues 110–115 (RSSLAR), Asp-128, 136–138 (VLE), Tyr-171, Lys-178, and Gln-182 contribute to the dCTP site. Glu-138 acts as the Proton donor/acceptor in catalysis. The tract at residues 169–193 (RPYNRRQDAKYRDQQGAVASRIDKD) is disordered.

Belongs to the dCTP deaminase family. As to quaternary structure, homotrimer.

The enzyme catalyses dCTP + H2O + H(+) = dUTP + NH4(+). The protein operates within pyrimidine metabolism; dUMP biosynthesis; dUMP from dCTP (dUTP route): step 1/2. Catalyzes the deamination of dCTP to dUTP. The protein is dCTP deaminase of Salmonella arizonae (strain ATCC BAA-731 / CDC346-86 / RSK2980).